Consider the following 134-residue polypeptide: Translation initiation factor 2 subunit beta (134 aa).

Over residues 1 to 12 the composition is skewed to basic and acidic residues; it reads MEYDDMLDRAME. The interval 1–28 is disordered; the sequence is MEYDDMLDRAMEETPEIDGTSERFEVPD.

The protein belongs to the eIF-2-beta/eIF-5 family. Heterotrimer composed of an alpha, a beta and a gamma chain.

In terms of biological role, eIF-2 functions in the early steps of protein synthesis by forming a ternary complex with GTP and initiator tRNA. In Haloarcula marismortui (strain ATCC 43049 / DSM 3752 / JCM 8966 / VKM B-1809) (Halobacterium marismortui), this protein is Translation initiation factor 2 subunit beta.